Reading from the N-terminus, the 157-residue chain is Protein-export protein SecB (157 aa).

It belongs to the SecB family. As to quaternary structure, homotetramer, a dimer of dimers. One homotetramer interacts with 1 SecA dimer.

The protein localises to the cytoplasm. Functionally, one of the proteins required for the normal export of preproteins out of the cell cytoplasm. It is a molecular chaperone that binds to a subset of precursor proteins, maintaining them in a translocation-competent state. It also specifically binds to its receptor SecA. The chain is Protein-export protein SecB from Magnetococcus marinus (strain ATCC BAA-1437 / JCM 17883 / MC-1).